The sequence spans 76 residues: Conotoxin VnMEKL-0111 (76 aa).

The first 18 residues, 1-18 (MKLTILFLVAAVLMSTQA), serve as a signal peptide directing secretion. A propeptide spanning residues 19-45 (LIQHDGEKSQKAKMKFLTARTLSAKTR) is cleaved from the precursor. Cystine bridges form between C49/C65, C56/C70, and C64/C74.

Belongs to the conotoxin O2 superfamily. In terms of tissue distribution, expressed by the venom duct.

The protein localises to the secreted. This chain is Conotoxin VnMEKL-0111, found in Conus ventricosus (Mediterranean cone).